A 494-amino-acid chain; its full sequence is Glutamyl-tRNA(Gln) amidotransferase subunit A (494 aa).

Residues Lys78 and Ser158 each act as charge relay system in the active site. Ser182 serves as the catalytic Acyl-ester intermediate.

It belongs to the amidase family. GatA subfamily. Heterotrimer of A, B and C subunits.

It carries out the reaction L-glutamyl-tRNA(Gln) + L-glutamine + ATP + H2O = L-glutaminyl-tRNA(Gln) + L-glutamate + ADP + phosphate + H(+). In terms of biological role, allows the formation of correctly charged Gln-tRNA(Gln) through the transamidation of misacylated Glu-tRNA(Gln) in organisms which lack glutaminyl-tRNA synthetase. The reaction takes place in the presence of glutamine and ATP through an activated gamma-phospho-Glu-tRNA(Gln). The polypeptide is Glutamyl-tRNA(Gln) amidotransferase subunit A (Jannaschia sp. (strain CCS1)).